A 972-amino-acid chain; its full sequence is FHF complex subunit HOOK-interacting protein 1B (972 aa).

2 disordered regions span residues 465–548 and 573–644; these read APSP…GELE and SAPY…SWPE. Ser-467 is modified (phosphoserine). Low complexity predominate over residues 478–501; sequence RGPGSPSVDSSSVTTVPRPSTPSR. 4 positions are modified to phosphoserine: Ser-510, Ser-523, Ser-529, and Ser-533. Residues 523–535 show a composition bias toward low complexity; it reads SPGLSASPASSPG. Phosphoserine is present on residues Ser-859 and Ser-897.

This sequence belongs to the FHIP family. As to quaternary structure, component of the FTS/Hook/FHIP complex (FHF complex), composed of AKTIP/FTS, FHIP1B, and one or more members of the Hook family of proteins HOOK1, HOOK2, and HOOK3. The FHF complex associates with the homotypic vesicular sorting complex (the HOPS complex).

In terms of biological role, component of the FTS/Hook/FHIP complex (FHF complex). The FHF complex may function to promote vesicle trafficking and/or fusion via the homotypic vesicular protein sorting complex (the HOPS complex). FHF complex promotes the distribution of AP-4 complex to the perinuclear area of the cell. The sequence is that of FHF complex subunit HOOK-interacting protein 1B from Homo sapiens (Human).